We begin with the raw amino-acid sequence, 847 residues long: Pep5-like zinc finger protein C16A10.03c (847 aa).

The stretch at 387 to 526 (YIEAIPFSDS…GIWLFNSDPM (140 aa)) is one CHCR repeat. The RING-type; atypical zinc finger occupies 780-814 (CDNCEGLLDVPFVSYSCLHLVHRDCATETVCPKCK).

Its subcellular location is the cytoplasm. The protein resides in the nucleus. This is Pep5-like zinc finger protein C16A10.03c from Schizosaccharomyces pombe (strain 972 / ATCC 24843) (Fission yeast).